Here is a 1088-residue protein sequence, read N- to C-terminus: Sterol regulatory element-binding protein 2 (1088 aa).

The interval 1–38 (METLTELGDELTLGDIDEMLQFVSNQVGEFPDLFEEQL) is transcriptional activation (acidic). Residues 1 to 440 (METLTELGDE…TGLGMMDRSR (440 aa)) lie on the Cytoplasmic side of the membrane. Residues 59 to 70 (AAQQPYTTSAPQ) are compositionally biased toward polar residues. The tract at residues 59 to 87 (AAQQPYTTSAPQPQLLPVKAPPQATPQRT) is disordered. The bHLH domain occupies 290-340 (ERRTTHNIIEKRYRSSINDKIMELKDLVMGTDAKMHKSGVLKKAIDYIKYL). Residues 340-361 (LQQVNQKLRQENMALKLANQKN) are leucine-zipper. The tract at residues 392–431 (SPPASDSGSPAVFSPYSVDSEPGSPLLDDEKVKDEPDSPT) is disordered. The helical transmembrane segment at 441-461 (MLLCTMTFLCLSFNPLTSLLH) threads the bilayer. Over 462–494 (PESGQYSERAVQHGTGRTMLGVEMSGFYGSWFD) the chain is Lumenal. Residues 495–515 (WLIPTIILWLVNGVIVLSVFM) traverse the membrane as a helical segment. Topologically, residues 516–1088 (KLLIHGEPVT…LSGGTAMAAS (573 aa)) are cytoplasmic.

Belongs to the SREBP family. In terms of assembly, forms a tight complex with scap, the SCAP-SREBP complex, in the endoplasmic reticulum membrane. As to quaternary structure, homodimer; efficient DNA binding of the soluble transcription factor fragment requires dimerization with another bHLH protein. Processed in the Golgi apparatus, releasing the protein from the membrane. At low cholesterol the SCAP-SREBP complex is recruited into COPII vesicles for export from the endoplasmic reticulum. In the Golgi, complex SREBPs are cleaved sequentially by site-1 (MBTPS1, S1P) and site-2 (MBTPS2, S2P) proteases. The first cleavage by site-1 protease occurs within the luminal loop, the second cleavage by site-2 protease occurs within the first transmembrane domain, releasing the transcription factor from the Golgi membrane.

Its subcellular location is the endoplasmic reticulum membrane. It localises to the golgi apparatus membrane. The protein localises to the cytoplasmic vesicle. It is found in the COPII-coated vesicle membrane. The protein resides in the nucleus. Functionally, precursor of the transcription factor form (Processed sterol regulatory element-binding protein 2), which is embedded in the endoplasmic reticulum membrane. Low sterol concentrations promote processing of this form, releasing the transcription factor form that translocates into the nucleus and activates transcription of genes involved in cholesterol biosynthesis. Key transcription factor that regulates expression of genes involved in cholesterol biosynthesis. Binds to the sterol regulatory element 1 (SRE-1) (5'-ATCACCCCAC-3'). Has dual sequence specificity binding to both an E-box motif (5'-ATCACGTGA-3') and to SRE-1 (5'-ATCACCCCAC-3'). Regulates transcription of genes related to cholesterol synthesis pathway. The chain is Sterol regulatory element-binding protein 2 from Xenopus laevis (African clawed frog).